A 393-amino-acid polypeptide reads, in one-letter code: NAD(P)H-quinone oxidoreductase subunit H, chloroplastic (393 aa).

Belongs to the complex I 49 kDa subunit family. NDH is composed of at least 16 different subunits, 5 of which are encoded in the nucleus.

Its subcellular location is the plastid. The protein localises to the chloroplast thylakoid membrane. It carries out the reaction a plastoquinone + NADH + (n+1) H(+)(in) = a plastoquinol + NAD(+) + n H(+)(out). The catalysed reaction is a plastoquinone + NADPH + (n+1) H(+)(in) = a plastoquinol + NADP(+) + n H(+)(out). Its function is as follows. NDH shuttles electrons from NAD(P)H:plastoquinone, via FMN and iron-sulfur (Fe-S) centers, to quinones in the photosynthetic chain and possibly in a chloroplast respiratory chain. The immediate electron acceptor for the enzyme in this species is believed to be plastoquinone. Couples the redox reaction to proton translocation, and thus conserves the redox energy in a proton gradient. The chain is NAD(P)H-quinone oxidoreductase subunit H, chloroplastic from Jasminum nudiflorum (Winter jasmine).